Consider the following 175-residue polypeptide: MEKKRRARINLSLEQLRSLLERHYSHQIRKRKLEKADILELSVKYVRSLQNSLQGLWLVPSGVDYPSGFRGGLPGSSQRLRPGEDDSGLRCPLLLQRRAGSTTDSANPQTASVLSPCLPAIWAPGPPAGGSQSPQSPFPPLGGLLESSTGILAPPPASNCQAENPRPGFRVWRPW.

The region spanning 1-49 (MEKKRRARINLSLEQLRSLLERHYSHQIRKRKLEKADILELSVKYVRSL) is the bHLH domain. The 34-residue stretch at 65–98 (YPSGFRGGLPGSSQRLRPGEDDSGLRCPLLLQRR) folds into the Orange domain. Low complexity predominate over residues 124 to 145 (PGPPAGGSQSPQSPFPPLGGLL). The disordered stretch occupies residues 124-175 (PGPPAGGSQSPQSPFPPLGGLLESSTGILAPPPASNCQAENPRPGFRVWRPW). A WRPW motif motif is present at residues 172 to 175 (WRPW).

Transcription repression requires formation of a complex with a corepressor protein of the Groucho/TLE family. As to expression, expressed exclusively in Purkinje cells.

The protein localises to the nucleus. Its function is as follows. Transcriptional repressor of genes that require a bHLH protein for their transcription. This Rattus norvegicus (Rat) protein is Transcription factor HES-3 (Hes3).